Consider the following 416-residue polypeptide: Lipase (416 aa).

Positions 1 to 28 (MKCCRIMFVLLGLWFVFGLSVPGGRTEA) are cleaved as a signal peptide. S141 (nucleophile) is an active-site residue. Position 314 (G314) interacts with Ca(2+). Catalysis depends on D345, which acts as the Charge relay system. D385 lines the Ca(2+) pocket. Catalysis depends on H386, which acts as the Charge relay system. 3 residues coordinate Ca(2+): E388, D393, and P394.

This sequence belongs to the AB hydrolase superfamily. As to quaternary structure, homodimer.

It is found in the secreted. The enzyme catalyses a triacylglycerol + H2O = a diacylglycerol + a fatty acid + H(+). Activity is inhibited by zinc and iron ions, and activated in vitro in 25% v/v DMSO and acetone. Triacylglycerol hydrolase that shows hydrolysis preference towards some of the natural oils such as olive, sunflower and corn oils. In Bacillus sp, this protein is Lipase.